Reading from the N-terminus, the 710-residue chain is Prolyl endopeptidase (710 aa).

The residue at position 1 (M1) is an N-acetylmethionine. At K157 the chain carries N6-acetyllysine. Active-site charge relay system residues include S554, D641, and H680.

Belongs to the peptidase S9A family.

Its subcellular location is the cytoplasm. The enzyme catalyses Hydrolysis of Pro-|-Xaa &gt;&gt; Ala-|-Xaa in oligopeptides.. Functionally, cleaves peptide bonds on the C-terminal side of prolyl residues within peptides that are up to approximately 30 amino acids long. In Mus musculus (Mouse), this protein is Prolyl endopeptidase (Prep).